Reading from the N-terminus, the 76-residue chain is Conopeptide X11.1 (76 aa).

The first 20 residues, 1-20, serve as a signal peptide directing secretion; it reads MMKLSVSFLLLLMLLPFITG. Positions 21 to 39 are excised as a propeptide; it reads EENSDSDVLKSGAAVRQGR. Disulfide bonds link Cys42–Cys56, Cys49–Cys61, Cys55–Cys66, and Cys60–Cys73.

As to expression, expressed by the venom duct.

It localises to the secreted. In terms of biological role, antimicrobial peptide that potently inhibits growth of Mycobacterium tuberculosis (H37Rv strain) (MIC=3 uM). This Conasprella ximenes (Interrupted cone) protein is Conopeptide X11.1.